The primary structure comprises 614 residues: Probable ATP-dependent RNA helicase DDX5 (614 aa).

Over residues 1–15 (MSSYSSDRDRGRDRG) the composition is skewed to basic and acidic residues. Residues 1-39 (MSSYSSDRDRGRDRGFGAPRFGGSRTGPLSGKKFGNPGE) form a disordered region. Phosphoserine is present on Ser24. Residue Lys32 is modified to N6-acetyllysine; alternate. A Glycyl lysine isopeptide (Lys-Gly) (interchain with G-Cter in SUMO2); alternate cross-link involves residue Lys32. Lys33 and Lys40 each carry N6-acetyllysine. Residue Lys45 forms a Glycyl lysine isopeptide (Lys-Gly) (interchain with G-Cter in SUMO2) linkage. Residue Lys53 forms a Glycyl lysine isopeptide (Lys-Gly) (interchain with G-Cter in SUMO2); alternate linkage. Lys53 is covalently cross-linked (Glycyl lysine isopeptide (Lys-Gly) (interchain with G-Cter in SUMO); alternate). Lys53 is covalently cross-linked (Glycyl lysine isopeptide (Lys-Gly) (interchain with G-Cter in SUMO1); alternate). A Q motif motif is present at residues 94–122 (LNFYEANFPANVMDVIARQNFTEPTAIQA). Residues 114–116 (FTE), Gln121, and 138–145 (AQTGSGKT) contribute to the ATP site. Residues 125–300 (WPVALSGLDM…EDFLKDYIHI (176 aa)) form the Helicase ATP-binding domain. An N6-acetyllysine modification is found at Lys236. The DEAD box signature appears at 248–251 (DEAD). A Phosphotyrosine modification is found at Tyr297. In terms of domain architecture, Helicase C-terminal spans 328–475 (KLIRLMEEIM…AINPKLLQLV (148 aa)). Residues Lys340, Lys343, Lys388, Lys391, Lys411, Lys437, Lys451, and Lys470 each participate in a glycyl lysine isopeptide (Lys-Gly) (interchain with G-Cter in SUMO2) cross-link. Residues 477 to 504 (DRGSGRSRGRGGMKDDRRDRYSAGKRGG) are disordered. The tract at residues 477-614 (DRGSGRSRGR…GYPMPTGYSQ (138 aa)) is transactivation domain. Ser480 is modified (phosphoserine). The segment covering 488 to 498 (GMKDDRRDRYS) has biased composition (basic and acidic residues). Lys523 participates in a covalent cross-link: Glycyl lysine isopeptide (Lys-Gly) (interchain with G-Cter in SUMO2).

Belongs to the DEAD box helicase family. DDX5/DBP2 subfamily. Identified in the spliceosome C complex. Component of a ribonucleoprotein complex containing mRNAs and RNA-binding proteins including DDX5, HNRNPH2 and SRSF1 as well as splicing regulator ARVCF. Interacts with RBM4; the interaction occurs in an RNA-independent manner. Interacts with AGO1 and AGO2. Interacts with ESR1, AR, EP300, CREBBP, POLR2A, TP53, RUNX2 and HDAC1. Self-associates. Interacts with DDX17. Interacts with BRDT. The large PER complex involved in the repression of transcriptional termination is composed of at least PER2, CDK9, DDX5, DHX9, NCBP1 and POLR2A (active). Interacts with DHX36; this interaction occurs in a RNA-dependent manner. Interacts with NUPR1. Interacts with ERCC6. Interacts with DDX3X in the cytoplasm; this interaction may be more efficient when both proteins are unphosphorylated. Post-translationally, sumoylated; sumoylation, promoted by PIAS1, promotes interaction with HDAC1 and transcriptional repression activity. Sumoylation also significantly increases stability, and reduces polyubiquitination. In terms of processing, polyubiquitinated, leading to proteasomal degradation. Weakly phosphorylated in the G1/S phase of the cell cycle and much more at G2/M, especially at Thr and Tyr residues.

Its subcellular location is the nucleus. The protein localises to the nucleolus. It localises to the cytoplasm. It catalyses the reaction ATP + H2O = ADP + phosphate + H(+). Its function is as follows. Involved in the alternative regulation of pre-mRNA splicing; its RNA helicase activity is necessary for increasing tau exon 10 inclusion and occurs in a RBM4-dependent manner. Binds to the tau pre-mRNA in the stem-loop region downstream of exon 10. The rate of ATP hydrolysis is highly stimulated by single-stranded RNA. Involved in transcriptional regulation; the function is independent of the RNA helicase activity. Transcriptional coactivator for androgen receptor AR but probably not ESR1. Synergizes with DDX17 and SRA1 RNA to activate MYOD1 transcriptional activity and involved in skeletal muscle differentiation. Transcriptional coactivator for p53/TP53 and involved in p53/TP53 transcriptional response to DNA damage and p53/TP53-dependent apoptosis. Transcriptional coactivator for RUNX2 and involved in regulation of osteoblast differentiation. Acts as a transcriptional repressor in a promoter-specific manner; the function probably involves association with histone deacetylases, such as HDAC1. As component of a large PER complex is involved in the inhibition of 3' transcriptional termination of circadian target genes such as PER1 and NR1D1 and the control of the circadian rhythms. This Mus musculus (Mouse) protein is Probable ATP-dependent RNA helicase DDX5 (Ddx5).